The sequence spans 108 residues: Glutaredoxin 4 (108 aa).

In terms of domain architecture, Glutaredoxin spans 4–106 (FQKIKKQIQD…KLILKVKKKY (103 aa)). Glutathione is bound at residue Lys-21. Cys-29 provides a ligand contact to [2Fe-2S] cluster. Glutathione is bound by residues Arg-58, Phe-70, and 83-84 (CS).

Belongs to the glutaredoxin family. Monothiol subfamily. As to quaternary structure, homodimer.

Its subcellular location is the cytoplasm. Monothiol glutaredoxin involved in the biogenesis of iron-sulfur clusters. This is Glutaredoxin 4 (grxD) from Buchnera aphidicola subsp. Acyrthosiphon pisum (strain APS) (Acyrthosiphon pisum symbiotic bacterium).